The sequence spans 468 residues: Siroheme synthase 3 (468 aa).

Positions 1-204 are precorrin-2 dehydrogenase /sirohydrochlorin ferrochelatase; that stretch reads MDYLPIFCRL…GDSASANQLA (204 aa). Residues 22–23 and 43–44 contribute to the NAD(+) site; these read EV and PE. A Phosphoserine modification is found at Ser128. The tract at residues 216–468 is uroporphyrinogen-III C-methyltransferase; the sequence is GEVVLVGAGP…GAADAALASA (253 aa). S-adenosyl-L-methionine is bound at residue Pro225. Catalysis depends on Asp248, which acts as the Proton acceptor. Lys270 serves as the catalytic Proton donor. Residues 301–303, Ile306, 331–332, Met383, and Gly412 contribute to the S-adenosyl-L-methionine site; these read GGD and TA.

This sequence in the N-terminal section; belongs to the precorrin-2 dehydrogenase / sirohydrochlorin ferrochelatase family. It in the C-terminal section; belongs to the precorrin methyltransferase family.

The enzyme catalyses uroporphyrinogen III + 2 S-adenosyl-L-methionine = precorrin-2 + 2 S-adenosyl-L-homocysteine + H(+). It catalyses the reaction precorrin-2 + NAD(+) = sirohydrochlorin + NADH + 2 H(+). It carries out the reaction siroheme + 2 H(+) = sirohydrochlorin + Fe(2+). Its pathway is cofactor biosynthesis; adenosylcobalamin biosynthesis; precorrin-2 from uroporphyrinogen III: step 1/1. It functions in the pathway cofactor biosynthesis; adenosylcobalamin biosynthesis; sirohydrochlorin from precorrin-2: step 1/1. The protein operates within porphyrin-containing compound metabolism; siroheme biosynthesis; precorrin-2 from uroporphyrinogen III: step 1/1. It participates in porphyrin-containing compound metabolism; siroheme biosynthesis; siroheme from sirohydrochlorin: step 1/1. Its pathway is porphyrin-containing compound metabolism; siroheme biosynthesis; sirohydrochlorin from precorrin-2: step 1/1. Its function is as follows. Multifunctional enzyme that catalyzes the SAM-dependent methylations of uroporphyrinogen III at position C-2 and C-7 to form precorrin-2 via precorrin-1. Then it catalyzes the NAD-dependent ring dehydrogenation of precorrin-2 to yield sirohydrochlorin. Finally, it catalyzes the ferrochelation of sirohydrochlorin to yield siroheme. The polypeptide is Siroheme synthase 3 (Aeromonas hydrophila subsp. hydrophila (strain ATCC 7966 / DSM 30187 / BCRC 13018 / CCUG 14551 / JCM 1027 / KCTC 2358 / NCIMB 9240 / NCTC 8049)).